The following is a 398-amino-acid chain: Phosphoglycerate kinase (398 aa).

Residues Asp21–Asn23, Arg36, His59–Arg62, Arg119, and Arg157 contribute to the substrate site. ATP-binding positions include Lys208, Gly296, Glu327, and Gly354 to Ser357.

It belongs to the phosphoglycerate kinase family. As to quaternary structure, monomer.

It is found in the cytoplasm. The enzyme catalyses (2R)-3-phosphoglycerate + ATP = (2R)-3-phospho-glyceroyl phosphate + ADP. Its pathway is carbohydrate degradation; glycolysis; pyruvate from D-glyceraldehyde 3-phosphate: step 2/5. The sequence is that of Phosphoglycerate kinase from Streptococcus pneumoniae (strain Taiwan19F-14).